A 503-amino-acid chain; its full sequence is 2-(3-amino-3-carboxypropyl)histidine synthase subunit 2 (503 aa).

Residues Cys-93, Cys-114, and Cys-334 each contribute to the [4Fe-4S] cluster site. Residues 464–503 (GLDSVDEGEGPSKLYEGQSGIAKGYVGEGSKEKIQRDFGK) form a disordered region. Residues 492–503 (GSKEKIQRDFGK) are compositionally biased toward basic and acidic residues.

The protein belongs to the DPH1/DPH2 family. DPH2 subfamily. As to quaternary structure, component of the 2-(3-amino-3-carboxypropyl)histidine synthase complex composed of dph1, dph2, dph3 and a NADH-dependent reductase, predominantly cbr1. Requires [4Fe-4S] cluster as cofactor.

The protein resides in the cytoplasm. It participates in protein modification; peptidyl-diphthamide biosynthesis. Functionally, required for the first step of diphthamide biosynthesis, a post-translational modification of histidine which occurs in elongation factor 2. Dph1 and dph2 transfer a 3-amino-3-carboxypropyl (ACP) group from S-adenosyl-L-methionine (SAM) to a histidine residue, the reaction is assisted by a reduction system comprising dph3 and a NADH-dependent reductase, predominantly cbr1. Facilitates the reduction of the catalytic iron-sulfur cluster found in the dph1 subunit. The sequence is that of 2-(3-amino-3-carboxypropyl)histidine synthase subunit 2 from Schizosaccharomyces pombe (strain 972 / ATCC 24843) (Fission yeast).